Here is a 72-residue protein sequence, read N- to C-terminus: MSKQTAIEQDGVILEALSNAMFKVELQNGHVITAHISGKMRMHYIKILPGDKVKVEMSPYDLTKGRISFRYK.

Residues 1-72 (MSKQTAIEQD…TKGRISFRYK (72 aa)) form the S1-like domain.

Belongs to the IF-1 family. As to quaternary structure, component of the 30S ribosomal translation pre-initiation complex which assembles on the 30S ribosome in the order IF-2 and IF-3, IF-1 and N-formylmethionyl-tRNA(fMet); mRNA recruitment can occur at any time during PIC assembly.

The protein localises to the cytoplasm. Functionally, one of the essential components for the initiation of protein synthesis. Stabilizes the binding of IF-2 and IF-3 on the 30S subunit to which N-formylmethionyl-tRNA(fMet) subsequently binds. Helps modulate mRNA selection, yielding the 30S pre-initiation complex (PIC). Upon addition of the 50S ribosomal subunit IF-1, IF-2 and IF-3 are released leaving the mature 70S translation initiation complex. This is Translation initiation factor IF-1 from Porphyromonas gingivalis (strain ATCC BAA-308 / W83).